Here is a 225-residue protein sequence, read N- to C-terminus: PKHD-type hydroxylase YbiX (225 aa).

The Fe2OG dioxygenase domain maps to Thr78–Ser177. Residues His96, Asp98, and His158 each coordinate Fe cation. Arg168 is a 2-oxoglutarate binding site.

Fe(2+) is required as a cofactor. Requires L-ascorbate as cofactor.

The sequence is that of PKHD-type hydroxylase YbiX from Escherichia coli (strain SMS-3-5 / SECEC).